Here is a 483-residue protein sequence, read N- to C-terminus: MSKNEIKLQMEYASSYETWLEAAEKLDVIEGKYQWREQKESDEYDYVLVESRLHELRRHRLSKNTRLLLGLLRNSVARDFANMDNSRLYNYAHSGTKKLIDEFIQEVLMCLTYLEETPDLSLDEKITEFSRLKLTTGNTALILSGGGTFGMTHIGVLQSLHEQGLVPKIICGSSAGAIVACAAAVRNKEEQEILLRQFHTGDLSVFTDPNAAPPSVIQSVKQYFTRGCVLDISHLERVMKLLIGDFTFQEAYDRSGYILNVTVSCGSLFEMPSLLNYITAPNVLVWSAVVATCSVPFLFKRATLWERDPLTREVSAFCVTDAPLWMDGSVDNDIPHAKLTELFHVNHFIVSQVNFHIVPFIMDPTSHNWVERCCKKAIDLAAQEVSLTFRLFAELGIFSVLFTKLQSVITQKYSGDITIIPRLNYREVNKVIKNPTPSFLLDAATRGKRGTWTKVPVTRNHCAIEILIAAAYTRLIKRSKSLK.

The 200-residue stretch at 141–340 (LILSGGGTFG…DNDIPHAKLT (200 aa)) folds into the PNPLA domain. A GXGXXG motif is present at residues 145–150 (GGGTFG). The GXSXG signature appears at 172–176 (GSSAG). The active-site Nucleophile is the serine 174. Aspartate 327 functions as the Proton acceptor in the catalytic mechanism.

The protein resides in the cytoplasm. It is found in the lipid droplet. It carries out the reaction a triacylglycerol + H2O = a diacylglycerol + a fatty acid + H(+). In terms of biological role, lipid particle-localized triacylglycerol (TAG) lipase. The lipid droplet/particle is a lipid storage compartment which serves as a depot of energy and building blocks for membrane lipid biosynthesis. Involved in the mobilization of the non-polar storage lipids triacylglycerols (TAGs) from lipid particles by hydrolysis of TAGs, releasing and supplying specific fatty acids to the appropriate metabolic pathways. This is Triacylglycerol lipase ptl3 (ptl3) from Schizosaccharomyces pombe (strain 972 / ATCC 24843) (Fission yeast).